An 800-amino-acid chain; its full sequence is Endonuclease MutS2 (800 aa).

Position 336–343 (336–343 (GPNTGGKT)) interacts with ATP. The region spanning 725–800 (LDLRGVRYEA…GDGATIVELK (76 aa)) is the Smr domain.

It belongs to the DNA mismatch repair MutS family. MutS2 subfamily. Homodimer. Binds to stalled ribosomes, contacting rRNA.

Its function is as follows. Endonuclease that is involved in the suppression of homologous recombination and thus may have a key role in the control of bacterial genetic diversity. Acts as a ribosome collision sensor, splitting the ribosome into its 2 subunits. Detects stalled/collided 70S ribosomes which it binds and splits by an ATP-hydrolysis driven conformational change. Acts upstream of the ribosome quality control system (RQC), a ribosome-associated complex that mediates the extraction of incompletely synthesized nascent chains from stalled ribosomes and their subsequent degradation. Probably generates substrates for RQC. This is Endonuclease MutS2 from Leuconostoc mesenteroides subsp. mesenteroides (strain ATCC 8293 / DSM 20343 / BCRC 11652 / CCM 1803 / JCM 6124 / NCDO 523 / NBRC 100496 / NCIMB 8023 / NCTC 12954 / NRRL B-1118 / 37Y).